Consider the following 860-residue polypeptide: Beta-glucosidase 1 (860 aa).

The signal sequence occupies residues 1 to 19; that stretch reads MKLSWLEAAALTAASVVSA. Residues Asn61, Asn211, and Asn252 are each glycosylated (N-linked (GlcNAc...) asparagine). Asp280 is an active-site residue. Residues Asn315, Asn322, Asn354, Asn387, Asn442, Asn523, Asn542, Asn564, Asn658, Asn668, Asn690, and Asn712 are each glycosylated (N-linked (GlcNAc...) asparagine).

This sequence belongs to the glycosyl hydrolase 3 family.

It carries out the reaction Hydrolysis of terminal, non-reducing beta-D-glucosyl residues with release of beta-D-glucose.. Its pathway is glycan metabolism; cellulose degradation. The sequence is that of Beta-glucosidase 1 from Aspergillus aculeatus.